The following is a 121-amino-acid chain: Small ribosomal subunit protein uS13 (121 aa).

A disordered region spans residues 91–121; that stretch reads HRRGLPVRGQKTKNNARTRKGPVKTVANKKK.

Belongs to the universal ribosomal protein uS13 family. Part of the 30S ribosomal subunit. Forms a loose heterodimer with protein S19. Forms two bridges to the 50S subunit in the 70S ribosome.

In terms of biological role, located at the top of the head of the 30S subunit, it contacts several helices of the 16S rRNA. In the 70S ribosome it contacts the 23S rRNA (bridge B1a) and protein L5 of the 50S subunit (bridge B1b), connecting the 2 subunits; these bridges are implicated in subunit movement. Contacts the tRNAs in the A and P-sites. This Staphylococcus saprophyticus subsp. saprophyticus (strain ATCC 15305 / DSM 20229 / NCIMB 8711 / NCTC 7292 / S-41) protein is Small ribosomal subunit protein uS13.